We begin with the raw amino-acid sequence, 412 residues long: Argininosuccinate synthase (412 aa).

ATP-binding positions include 12-20 (AYSGGLDTS) and Ala39. L-citrulline is bound by residues Tyr91 and Ser96. Gly121 provides a ligand contact to ATP. L-aspartate contacts are provided by Thr123, Asn127, and Asp128. Asn127 is a binding site for L-citrulline. L-citrulline-binding residues include Arg131, Ser180, Ser189, Glu265, and Tyr277.

This sequence belongs to the argininosuccinate synthase family. Type 1 subfamily. As to quaternary structure, homotetramer.

Its subcellular location is the cytoplasm. The catalysed reaction is L-citrulline + L-aspartate + ATP = 2-(N(omega)-L-arginino)succinate + AMP + diphosphate + H(+). It functions in the pathway amino-acid biosynthesis; L-arginine biosynthesis; L-arginine from L-ornithine and carbamoyl phosphate: step 2/3. This is Argininosuccinate synthase from Pseudoalteromonas atlantica (strain T6c / ATCC BAA-1087).